The primary structure comprises 325 residues: GTP 3',8-cyclase (325 aa).

The Radical SAM core domain occupies 1–226 (MNTVNYLRIS…EGACYGNGPA (226 aa)). Residue Arg8 coordinates GTP. 2 residues coordinate [4Fe-4S] cluster: Cys15 and Cys19. Tyr21 contributes to the S-adenosyl-L-methionine binding site. Cys22 is a [4Fe-4S] cluster binding site. Arg60 is a binding site for GTP. Gly64 provides a ligand contact to S-adenosyl-L-methionine. Ser91 serves as a coordination point for GTP. Ser115 is a binding site for S-adenosyl-L-methionine. A GTP-binding site is contributed by Lys152. Met186 serves as a coordination point for S-adenosyl-L-methionine. Residues Cys249 and Cys252 each contribute to the [4Fe-4S] cluster site. 254-256 (RVR) is a GTP binding site. Residue Cys266 participates in [4Fe-4S] cluster binding.

Belongs to the radical SAM superfamily. MoaA family. In terms of assembly, monomer and homodimer. Requires [4Fe-4S] cluster as cofactor.

The enzyme catalyses GTP + AH2 + S-adenosyl-L-methionine = (8S)-3',8-cyclo-7,8-dihydroguanosine 5'-triphosphate + 5'-deoxyadenosine + L-methionine + A + H(+). The protein operates within cofactor biosynthesis; molybdopterin biosynthesis. Functionally, catalyzes the cyclization of GTP to (8S)-3',8-cyclo-7,8-dihydroguanosine 5'-triphosphate. The protein is GTP 3',8-cyclase of Gloeobacter violaceus (strain ATCC 29082 / PCC 7421).